The primary structure comprises 425 residues: Meiotic recombination protein spo-11 (425 aa).

The tract at residues 1 to 38 is disordered; it reads MYEYSFNPNIDHEPGSVESQQSTIYSDSDDSDDSFLDD. The region spanning 15-158 is the Topo IIA-type catalytic domain; the sequence is GSVESQQSTI…LNILSCGRGI (144 aa). The span at 27–38 shows a compositional bias: acidic residues; that stretch reads DSDDSDDSFLDD. Y119 acts as the O-(5'-phospho-DNA)-tyrosine intermediate in catalysis. Residues E202 and D255 each contribute to the Mg(2+) site.

It belongs to the TOP6A family. Requires Mg(2+) as cofactor.

Its subcellular location is the nucleus. The enzyme catalyses ATP-dependent breakage, passage and rejoining of double-stranded DNA.. Its function is as follows. Required for meiotic recombination. Mediates DNA cleavage that forms the double-strand breaks (DSB) that initiate meiotic recombination. In Caenorhabditis elegans, this protein is Meiotic recombination protein spo-11 (spo-11).